The primary structure comprises 244 residues: tRNA (guanine-N(1)-)-methyltransferase (244 aa).

S-adenosyl-L-methionine is bound by residues Gly-123 and 143–148; that span reads LGDFVM.

It belongs to the RNA methyltransferase TrmD family. Homodimer.

Its subcellular location is the cytoplasm. It catalyses the reaction guanosine(37) in tRNA + S-adenosyl-L-methionine = N(1)-methylguanosine(37) in tRNA + S-adenosyl-L-homocysteine + H(+). Functionally, specifically methylates guanosine-37 in various tRNAs. This is tRNA (guanine-N(1)-)-methyltransferase from Ruegeria sp. (strain TM1040) (Silicibacter sp.).